A 143-amino-acid chain; its full sequence is Large ribosomal subunit protein uL13 (143 aa).

It belongs to the universal ribosomal protein uL13 family. In terms of assembly, part of the 50S ribosomal subunit.

Its function is as follows. This protein is one of the early assembly proteins of the 50S ribosomal subunit, although it is not seen to bind rRNA by itself. It is important during the early stages of 50S assembly. This is Large ribosomal subunit protein uL13 from Albidiferax ferrireducens (strain ATCC BAA-621 / DSM 15236 / T118) (Rhodoferax ferrireducens).